Here is a 240-residue protein sequence, read N- to C-terminus: Ubiquinone biosynthesis O-methyltransferase (240 aa).

4 residues coordinate S-adenosyl-L-methionine: Arg44, Gly64, Asp85, and Met129.

Belongs to the methyltransferase superfamily. UbiG/COQ3 family.

The enzyme catalyses a 3-demethylubiquinol + S-adenosyl-L-methionine = a ubiquinol + S-adenosyl-L-homocysteine + H(+). It carries out the reaction a 3-(all-trans-polyprenyl)benzene-1,2-diol + S-adenosyl-L-methionine = a 2-methoxy-6-(all-trans-polyprenyl)phenol + S-adenosyl-L-homocysteine + H(+). The protein operates within cofactor biosynthesis; ubiquinone biosynthesis. O-methyltransferase that catalyzes the 2 O-methylation steps in the ubiquinone biosynthetic pathway. The chain is Ubiquinone biosynthesis O-methyltransferase from Escherichia coli O157:H7.